The primary structure comprises 260 residues: LIM and SH3 domain protein 1 (260 aa).

Residue Met-1 is modified to N-acetylmethionine. The LIM zinc-binding domain occupies 5–56; sequence CARCCKIVYPTEKVNCLDKFWHKACFHCETCKMTLNMKNYKGYEKKPYCNAH. Lys-42 carries the N6-acetyllysine modification. 2 Nebulin repeats span residues 61 to 95 and 97 to 131; these read SFTM…KNKG and GFSV…KSRM. Phosphothreonine is present on Thr-68. Lys-75 carries the post-translational modification N6-methyllysine. Ser-99 carries the post-translational modification Phosphoserine. Position 104 is a phosphothreonine (Thr-104). Position 112 is an N6-succinyllysine (Lys-112). 2 positions are modified to phosphoserine: Ser-118 and Ser-134. Residues 123–204 form a disordered region; it reads HEEFEKSRMG…QRSAPGGGGK (82 aa). Basic and acidic residues predominate over residues 140–155; sequence ECERRDPQESSYRRPQ. A compositionally biased stretch (low complexity) spans 171-180; sequence QQPQQQPAAQ. In terms of domain architecture, SH3 spans 201–260; it reads GGGKRYRAVYDYSAADEDEVSFQDGDTIVNVQQIDDGWMYGTVERTGDTGMLPANYVEAI.

Interacts with F-actin. Interacts with ANKRD54. Interacts with KBTBD10. Phosphorylated.

Its subcellular location is the cytoplasm. It is found in the cell cortex. The protein resides in the cytoskeleton. Plays an important role in the regulation of dynamic actin-based, cytoskeletal activities. Agonist-dependent changes in LASP1 phosphorylation may also serve to regulate actin-associated ion transport activities, not only in the parietal cell but also in certain other F-actin-rich secretory epithelial cell types. In Bos taurus (Bovine), this protein is LIM and SH3 domain protein 1 (LASP1).